We begin with the raw amino-acid sequence, 255 residues long: Thiazole synthase (255 aa).

Residue lysine 96 is the Schiff-base intermediate with DXP of the active site. 1-deoxy-D-xylulose 5-phosphate is bound by residues glycine 157, 184-185, and 206-207; these read AG and NT.

Belongs to the ThiG family. In terms of assembly, homotetramer. Forms heterodimers with either ThiH or ThiS.

The protein localises to the cytoplasm. It catalyses the reaction [ThiS sulfur-carrier protein]-C-terminal-Gly-aminoethanethioate + 2-iminoacetate + 1-deoxy-D-xylulose 5-phosphate = [ThiS sulfur-carrier protein]-C-terminal Gly-Gly + 2-[(2R,5Z)-2-carboxy-4-methylthiazol-5(2H)-ylidene]ethyl phosphate + 2 H2O + H(+). The protein operates within cofactor biosynthesis; thiamine diphosphate biosynthesis. Functionally, catalyzes the rearrangement of 1-deoxy-D-xylulose 5-phosphate (DXP) to produce the thiazole phosphate moiety of thiamine. Sulfur is provided by the thiocarboxylate moiety of the carrier protein ThiS. In vitro, sulfur can be provided by H(2)S. The polypeptide is Thiazole synthase (Clostridium acetobutylicum (strain ATCC 824 / DSM 792 / JCM 1419 / IAM 19013 / LMG 5710 / NBRC 13948 / NRRL B-527 / VKM B-1787 / 2291 / W)).